A 352-amino-acid chain; its full sequence is D-alanine--D-alanine ligase (352 aa).

The ATP-grasp domain maps to 135 to 344 (KTVFAKAGLP…FPQLVDRLIE (210 aa)). Residue 171-226 (EETLNYPCFVKPANLGSSVGIAKVRSRSELEKALDQAASYDRRIIVEAGVIAREVE) coordinates ATP. 3 residues coordinate Mg(2+): aspartate 297, glutamate 311, and asparagine 313.

This sequence belongs to the D-alanine--D-alanine ligase family. Mg(2+) serves as cofactor. The cofactor is Mn(2+).

The protein localises to the cytoplasm. It catalyses the reaction 2 D-alanine + ATP = D-alanyl-D-alanine + ADP + phosphate + H(+). Its pathway is cell wall biogenesis; peptidoglycan biosynthesis. Cell wall formation. This is D-alanine--D-alanine ligase from Gloeothece citriformis (strain PCC 7424) (Cyanothece sp. (strain PCC 7424)).